The chain runs to 375 residues: cAMP-dependent protein kinase regulatory subunit (375 aa).

The tract at residues 28–142 (RFCADYFNER…SLYKSVSHNF (115 aa)) is dimerization and phosphorylation. Residues 41–50 (REEADDDGPR) are compositionally biased toward basic and acidic residues. The disordered stretch occupies residues 41–102 (REEADDDGPR…EPAAPFTRRT (62 aa)). Positions 64–82 (GSSSRSTDGSLFRSSFADT) are enriched in polar residues. The segment covering 83-97 (SSEGPGSASSEPAAP) has biased composition (low complexity). Phosphoserine is present on S103. Residues 143 to 258 (LFGN…FLKE), E208, R217, 261 to 375 (ILSD…DPTK), E328, and R337 each bind 3',5'-cyclic AMP.

This sequence belongs to the cAMP-dependent kinase regulatory chain family. As to quaternary structure, tetramer, composed of 2 regulatory (R) and 2 catalytic (C) subunits. In the presence of cAMP it dissociates into 2 active monomeric C subunits and an R dimer.

The sequence is that of cAMP-dependent protein kinase regulatory subunit (PKAR) from Yarrowia lipolytica (strain CLIB 122 / E 150) (Yeast).